The primary structure comprises 239 residues: Ribonuclease PH (239 aa).

Phosphate contacts are provided by residues arginine 87 and 125–127 (GTR).

It belongs to the RNase PH family. As to quaternary structure, homohexameric ring arranged as a trimer of dimers.

The catalysed reaction is tRNA(n+1) + phosphate = tRNA(n) + a ribonucleoside 5'-diphosphate. Its function is as follows. Phosphorolytic 3'-5' exoribonuclease that plays an important role in tRNA 3'-end maturation. Removes nucleotide residues following the 3'-CCA terminus of tRNAs; can also add nucleotides to the ends of RNA molecules by using nucleoside diphosphates as substrates, but this may not be physiologically important. Probably plays a role in initiation of 16S rRNA degradation (leading to ribosome degradation) during starvation. This is Ribonuclease PH from Ectopseudomonas mendocina (strain ymp) (Pseudomonas mendocina).